We begin with the raw amino-acid sequence, 219 residues long: GPI ethanolamine phosphate transferase, stabilizing subunit (219 aa).

6 helical membrane passes run 11–31 (YTHL…SLFL), 42–62 (TWLC…YLVV), 86–106 (YFLM…APLI), 113–133 (FLFA…LLGP), 155–175 (LQIT…PIPL), and 189–209 (TLGA…WIYW).

The protein belongs to the PIGF family. Part of the ethanolamine phosphate transferase 3 complex composed by PIGO and PIGF. Part of the ethanolamine phosphate transferase 2 complex with PIGG. PIGF is required to stabilize PIGG and PIGO.

It localises to the endoplasmic reticulum membrane. It functions in the pathway glycolipid biosynthesis; glycosylphosphatidylinositol-anchor biosynthesis. Functionally, stabilizing subunit of the ethanolamine phosphate transferase 3 and ethanolamine phosphate transferase 2 complexes that sequentially transfer an ethanolamine phosphate (EtNP) from a phosphatidylethanolamine (PE) to the 6-OH position of the third alpha-1,2-linked mannose and the second alpha-1,6-linked mannose of the alpha-D-Man-(1-&gt;2)-alpha-D-Man-(1-&gt;6)-2-PEtn-alpha-D-Man-(1-&gt;4)-alpha-D-GlcN-(1-&gt;6)-(1-radyl,2-acyl-sn-glycero-3-phospho)-2-acyl-inositol (also termed H6) intermediate to generate a 6-PEtn-alpha-D-Man-(1-&gt;2)-6-PEtn-alpha-D-Man-(1-&gt;6)-2-PEtn-alpha-D-Man-(1-&gt;4)-alpha-D-GlcN-(1-&gt;6)-(1-radyl,2-acyl-sn-glycero-3-phospho)-2-acyl-inositol (also termed H8). Participates in the tenth and eleventh steps of the glycosylphosphatidylinositol-anchor biosynthesis, in association with PIGO and PIGG, respectively. The protein is GPI ethanolamine phosphate transferase, stabilizing subunit of Homo sapiens (Human).